A 160-amino-acid polypeptide reads, in one-letter code: Major strawberry allergen Fra a 1-A (160 aa).

The protein belongs to the BetVI family. As to quaternary structure, monomer.

Its function is as follows. May be involved in ripening of fruits. The chain is Major strawberry allergen Fra a 1-A from Fragaria ananassa (Strawberry).